Consider the following 1060-residue polypeptide: Protein FAM184B (1060 aa).

The span at 1-17 (MASALNSKINPPGTCQG) shows a compositional bias: polar residues. The interval 1–24 (MASALNSKINPPGTCQGSKADGGA) is disordered. The stretch at 51 to 159 (ALNTRQDEAE…EMLELKADYE (109 aa)) forms a coiled coil. Residues 165–191 (LTSHEATPQGRLPQESPETKSEPGQGP) form a disordered region. Coiled-coil stretches lie at residues 192 to 333 (EMQE…DRMM) and 402 to 502 (MKQQ…RLEE). 3 disordered regions span residues 532–566 (QDPC…EERT), 681–700 (TEER…HQTH), and 762–803 (GRQQ…GSGE). 3 stretches are compositionally biased toward basic and acidic residues: residues 536–554 (LKLD…KLAA), 681–690 (TEERLKKESS), and 773–785 (DSKD…EERG). Positions 584-769 (LKEKTSKIQR…ALGRQQASSQ (186 aa)) form a coiled coil. Residues 806 to 934 (GLWEENAQLQ…KQLTEERRFH (129 aa)) are a coiled coil. 2 stretches are compositionally biased toward polar residues: residues 994-1009 (SRIN…SLDP) and 1018-1030 (KPNQ…TATR). The tract at residues 994-1050 (SRINAPPITTSPSLDPSPSCGRTYKPNQSTDAKTATRTPDGETAQAKEVQQKQGSPH) is disordered.

This sequence belongs to the FAM184 family.

The chain is Protein FAM184B (FAM184B) from Homo sapiens (Human).